The following is a 126-amino-acid chain: Holo-[acyl-carrier-protein] synthase (126 aa).

Asp9 and Glu58 together coordinate Mg(2+).

It belongs to the P-Pant transferase superfamily. AcpS family. Mg(2+) is required as a cofactor.

The protein resides in the cytoplasm. It carries out the reaction apo-[ACP] + CoA = holo-[ACP] + adenosine 3',5'-bisphosphate + H(+). Transfers the 4'-phosphopantetheine moiety from coenzyme A to a Ser of acyl-carrier-protein. The polypeptide is Holo-[acyl-carrier-protein] synthase (Serratia proteamaculans (strain 568)).